Here is a 151-residue protein sequence, read N- to C-terminus: Large ribosomal subunit protein bL9 (151 aa).

Belongs to the bacterial ribosomal protein bL9 family.

Its function is as follows. Binds to the 23S rRNA. The protein is Large ribosomal subunit protein bL9 of Prochlorococcus marinus (strain MIT 9301).